The primary structure comprises 267 residues: Orotidine 5'-phosphate decarboxylase (267 aa).

Residues D37, K59–H61, D91–T100, Y217, and R235 contribute to the substrate site. K93 functions as the Proton donor in the catalytic mechanism.

It belongs to the OMP decarboxylase family.

It carries out the reaction orotidine 5'-phosphate + H(+) = UMP + CO2. It participates in pyrimidine metabolism; UMP biosynthesis via de novo pathway; UMP from orotate: step 2/2. The sequence is that of Orotidine 5'-phosphate decarboxylase (URA3) from Kluyveromyces marxianus (Yeast).